The chain runs to 158 residues: NADH-quinone oxidoreductase subunit B (158 aa).

Cys-36, Cys-37, Cys-101, and Cys-131 together coordinate [4Fe-4S] cluster.

It belongs to the complex I 20 kDa subunit family. NDH-1 is composed of 14 different subunits. Subunits NuoB, C, D, E, F, and G constitute the peripheral sector of the complex. It depends on [4Fe-4S] cluster as a cofactor.

It localises to the cell inner membrane. It catalyses the reaction a quinone + NADH + 5 H(+)(in) = a quinol + NAD(+) + 4 H(+)(out). In terms of biological role, NDH-1 shuttles electrons from NADH, via FMN and iron-sulfur (Fe-S) centers, to quinones in the respiratory chain. The immediate electron acceptor for the enzyme in this species is believed to be ubiquinone. Couples the redox reaction to proton translocation (for every two electrons transferred, four hydrogen ions are translocated across the cytoplasmic membrane), and thus conserves the redox energy in a proton gradient. The polypeptide is NADH-quinone oxidoreductase subunit B (Francisella philomiragia subsp. philomiragia (strain ATCC 25017 / CCUG 19701 / FSC 153 / O#319-036)).